A 231-amino-acid chain; its full sequence is Chromosome partition protein MukE (231 aa).

Residues 197–231 (RDGEAMPIEGGLSLDDSENDETSDNSAEGTGDEQP) form a disordered region.

This sequence belongs to the MukE family. Interacts, and probably forms a ternary complex, with MukF and MukB. The complex formation is stimulated by calcium or magnesium.

It is found in the cytoplasm. It localises to the nucleoid. In terms of biological role, involved in chromosome condensation, segregation and cell cycle progression. May participate in facilitating chromosome segregation by condensation DNA from both sides of a centrally located replisome during cell division. Probably acts via its interaction with MukB and MukF. The protein is Chromosome partition protein MukE of Photorhabdus laumondii subsp. laumondii (strain DSM 15139 / CIP 105565 / TT01) (Photorhabdus luminescens subsp. laumondii).